The sequence spans 454 residues: L-cysteine desulfhydrase-like protein lolT1 (454 aa).

The residue at position 227 (Lys227) is an N6-(pyridoxal phosphate)lysine.

It belongs to the class-V pyridoxal-phosphate-dependent aminotransferase family. Requires pyridoxal 5'-phosphate as cofactor.

Its pathway is alkaloid biosynthesis. Its function is as follows. L-cysteine desulfhydrase-like protein; part of the gene cluster that mediates the biosynthesis of loline alkaloids, potent insecticidal agents composed of a pyrrolizidine ring system and an uncommon ether bridge linking carbons 2 and 7. Lolines are structurally differentiated by the various modifications of the L-amino group and include norloline, loline, N-methylloline, N-acetylloline, N-acetylnorloline, and N-formylloline. The first committed step is the condensation of O-acetyl-L-homoserine (derived from L-aspartic acid) and L-proline, probably catalyzed by the gamma-type pyridoxal 5'-phosphate(PLP)-dependent enzyme lolC, to give the diamino diacid, NACPP. Ensuing cyclization, decarboxylation, and acetylation steps yield 1-exo-acetamidopyrrolizidine (AcAP). LolO is required for installation of the ether bridge upon the pathway intermediate, 1-exo-acetamidopyrrolizidine (AcAP). In sequential 2-oxoglutarate- and O(2)-consuming steps, lolO removes hydrogens from C2 and C7 of AcAP to form both carbon-oxygen bonds in N-acetylnorloline (NANL), the precursor to all other lolines. The enzymes lolD, lolE, lolF and lolT have also been proposed to be involved in the ether-bridge installation. Further processing of the exocyclic moiety of NANL by fungal N-acetamidase (LolN), methyltransferase (LolM), and cytochrome P450 (LolP) enzymes, with occasional involvement of a plant acetyltransferase, generates the other known lolines. LolN transforms NANL to norlonine which is monomethylated and dimethylated to respectively lonine and N-methyllonine (NML) by lolM. LolP catalyzes hydroxylation of the methyl group in N-methylloline (NML) and further oxygenation to N-formylloline (NFL). A plant acetyltransferase is responsible for the acetylation of loline to form N-acetylloline (NAL). LolA might interact with aspartate kinase to prevent feedback inhibition of its activity by these end products and thereby promote production of L-homoserine from L-aspartate. This is L-cysteine desulfhydrase-like protein lolT1 from Epichloe uncinata (Endophyte fungus).